The sequence spans 525 residues: Keratin, type II cytoskeletal 71 (525 aa).

Residues 1-131 (MSRQFTCKSG…DPEIQKVRAQ (131 aa)) are head. The tract at residues 132–167 (EREQIKALNNKFASFIDKVRFLEQQNQVLETKWELL) is coil 1A. An IF rod domain is found at 132–445 (EREQIKALNN…KLLESEECRM (314 aa)). Positions 168 to 186 (QQLDLNNCKNNLEPILEGY) are linker 1. Positions 187–278 (ISNLRKQLET…CLYEAEIAQI (92 aa)) are coil 1B. The linker 12 stretch occupies residues 279 to 302 (QSHISDMSVILSMDNNRDLNLDSI). The segment at 303-441 (IDEVRAQYED…ATYRKLLESE (139 aa)) is coil 2. Residues 442 to 525 (ECRMSGEFPS…LSAPSKKASR (84 aa)) are tail. Residues 492-525 (VRGGESRSRSSTTDYKDALGKGSSLSAPSKKASR) are disordered. The segment covering 495 to 510 (GESRSRSSTTDYKDAL) has biased composition (basic and acidic residues).

This sequence belongs to the intermediate filament family. Heterodimer of a type I and a type II keratin. Associates with KRT16 and/or KRT17.

It is found in the cytoplasm. The protein resides in the cytoskeleton. Plays a central role in hair formation. Essential component of keratin intermediate filaments in the inner root sheath (IRS) of the hair follicle. The protein is Keratin, type II cytoskeletal 71 (KRT71) of Bos taurus (Bovine).